The sequence spans 391 residues: MSETTARRDADAVLRARAEIDLAALRANVRALRERAPGAALMAVVKADAYGHGAIPCARAAVAAGATWLGTATPQEALALRAAEPGLPDDVRIMCWLWTPGGPWREAVEARLDVSVSAMWAMEEVTGAARAAGVPARVQLKADTGLGRGGCQPGADWERLVGAALRAEEEGLLRVTGLWSHFACADEPGHPSIAAQLTRFREMTAYAEQRGLRPEVRHIANSPATLTLPDAHFDLVRPGIAMYGVSPSPEIGTPADFGLRPVMTLAASLALVKQVPGGHGVSYGHHYTTPGETTLGLVPLGYADGIPRHASSSGPVLVDGKWRTVAGRIAMDQFVVDLGGDRPEPGAEAVLFGPGDRGEPTAEDWAQAAGTIAYEIVTRIGSRVPRVYVNE.

Lys46 serves as the catalytic Proton acceptor; specific for D-alanine. Lys46 is modified (N6-(pyridoxal phosphate)lysine). Arg148 lines the substrate pocket. Tyr283 functions as the Proton acceptor; specific for L-alanine in the catalytic mechanism. Met331 lines the substrate pocket.

This sequence belongs to the alanine racemase family. Pyridoxal 5'-phosphate is required as a cofactor.

The enzyme catalyses L-alanine = D-alanine. Its pathway is amino-acid biosynthesis; D-alanine biosynthesis; D-alanine from L-alanine: step 1/1. Its function is as follows. Catalyzes the interconversion of L-alanine and D-alanine. May also act on other amino acids. The polypeptide is Alanine racemase (alr) (Streptomyces coelicolor (strain ATCC BAA-471 / A3(2) / M145)).